The chain runs to 137 residues: Small ribosomal subunit protein bS6 (137 aa).

The disordered stretch occupies residues 113–137; it reads EEQREKKNFRKPFIKREEAATKENK. The segment covering 126–137 has biased composition (basic and acidic residues); that stretch reads IKREEAATKENK.

Belongs to the bacterial ribosomal protein bS6 family.

Functionally, binds together with bS18 to 16S ribosomal RNA. The sequence is that of Small ribosomal subunit protein bS6 from Mycoplasma capricolum subsp. capricolum (strain California kid / ATCC 27343 / NCTC 10154).